We begin with the raw amino-acid sequence, 933 residues long: Serine/threonine-protein kinase EDR1 (933 aa).

Residues Met-1–Arg-10 are compositionally biased toward basic residues. Disordered stretches follow at residues Met-1 to Met-74, Cys-342 to Gly-424, His-527 to Ser-550, and His-604 to Asp-650. Positions Asn-37 to Glu-48 are enriched in polar residues. A compositionally biased stretch (low complexity) spans Ala-53 to Ser-68. Residues Cys-342–Asn-356 are compositionally biased toward polar residues. The span at Ser-367–Ser-378 shows a compositional bias: low complexity. The segment covering Leu-379–Asp-389 has biased composition (basic and acidic residues). A compositionally biased stretch (low complexity) spans Ser-404 to Thr-413. Residues Gly-533–Ser-550 show a composition bias toward polar residues. Positions Gln-607–Ser-621 are enriched in basic and acidic residues. The region spanning Leu-669–Asn-925 is the Protein kinase domain. Residues Ile-675–Val-683 and Lys-696 each bind ATP. Asp-792 (proton acceptor) is an active-site residue.

Belongs to the protein kinase superfamily. TKL Ser/Thr protein kinase family. RAF subfamily. Interacts with KEG. Binds and recruited by EDR4 at the powdery mildew (e.g. G.cichoracearum) penetration site on the plasma membrane. Autophosphorylated.

It is found in the cell membrane. It localises to the endosome. The protein resides in the nucleus. Its subcellular location is the endoplasmic reticulum. The protein localises to the golgi apparatus. It is found in the trans-Golgi network. It localises to the early endosome. It carries out the reaction L-seryl-[protein] + ATP = O-phospho-L-seryl-[protein] + ADP + H(+). The enzyme catalyses L-threonyl-[protein] + ATP = O-phospho-L-threonyl-[protein] + ADP + H(+). In terms of biological role, MAPKKK serine/threonine-protein kinase involved in the regulation of a MAP kinase cascade (probably including MPK3 and MPK6) that negatively regulates salicylic acid- (SA-) dependent defense responses, abscisic acid (ABA) signaling, and ethylene-induced senescence. Also modulates stress response (e.g. drought) signaling and cell death, in an ORE9-dependent manner. Functions at a point of cross talk between ethylene, ABA and SA signaling that impinges on senescence and cell death. On the other hand, it confers sensitivity to various pathogens such as the fungus E.cichoracearum, the oomycete H.parasitica and the bacteria P.syringae pv. tomato DC3000. Required for resistance to some hemibiotrophic/necrotrophic fungal pathogens (e.g. C.gloeosporioides, C.higginsianum and A.brassicicola) through the induction of defensin expression, probably by repressing MYC2, an inhibitor of defensin genes (PDFs). Together with KEG, may regulate endocytic trafficking and/or the formation of signaling complexes on trans-Golgi network (TGN)/ early endosome (EE) vesicles during stress responses. The sequence is that of Serine/threonine-protein kinase EDR1 (EDR1) from Arabidopsis thaliana (Mouse-ear cress).